The primary structure comprises 344 residues: Phosphoribosylformylglycinamidine cyclo-ligase (344 aa).

The protein belongs to the AIR synthase family.

It localises to the cytoplasm. It carries out the reaction 2-formamido-N(1)-(5-O-phospho-beta-D-ribosyl)acetamidine + ATP = 5-amino-1-(5-phospho-beta-D-ribosyl)imidazole + ADP + phosphate + H(+). It functions in the pathway purine metabolism; IMP biosynthesis via de novo pathway; 5-amino-1-(5-phospho-D-ribosyl)imidazole from N(2)-formyl-N(1)-(5-phospho-D-ribosyl)glycinamide: step 2/2. This chain is Phosphoribosylformylglycinamidine cyclo-ligase, found in Laribacter hongkongensis (strain HLHK9).